The following is a 316-amino-acid chain: Large ribosomal subunit protein uL4 (316 aa).

The interval Met-1 to Asp-211 is large ribosomal subunit protein uL4. Disordered stretches follow at residues Ala-44–Gly-76 and Glu-231–Asp-316. A compositionally biased stretch (basic residues) spans Gly-60 to Gly-71. A unknown region spans residues Ala-212 to Asp-316. Over residues Gln-255–Gln-270 the composition is skewed to low complexity. 2 stretches are compositionally biased toward acidic residues: residues Glu-281–Glu-291 and Thr-301–Asp-316.

This sequence belongs to the universal ribosomal protein uL4 family. As to quaternary structure, part of the 50S ribosomal subunit.

One of the primary rRNA binding proteins, this protein initially binds near the 5'-end of the 23S rRNA. It is important during the early stages of 50S assembly. It makes multiple contacts with different domains of the 23S rRNA in the assembled 50S subunit and ribosome. In terms of biological role, forms part of the polypeptide exit tunnel. This chain is Large ribosomal subunit protein uL4, found in Synechococcus sp. (strain JA-2-3B'a(2-13)) (Cyanobacteria bacterium Yellowstone B-Prime).